A 108-amino-acid polypeptide reads, in one-letter code: MFKGGMGNMMKQAQQMQERMQQAQEEVANMEVTGEAGAGLVKITMLGNHNVKRVSIDPSLMEDDQEMLEDLIAAATNDAVRRVEETSKERMSEITGGMGLPPGFKMPF.

2 disordered regions span residues 1-26 (MFKGGMGNMMKQAQQMQERMQQAQEE) and 88-108 (KERMSEITGGMGLPPGFKMPF). Low complexity predominate over residues 9-26 (MMKQAQQMQERMQQAQEE).

The protein belongs to the YbaB/EbfC family. As to quaternary structure, homodimer.

Its subcellular location is the cytoplasm. The protein resides in the nucleoid. Its function is as follows. Binds to DNA and alters its conformation. May be involved in regulation of gene expression, nucleoid organization and DNA protection. This chain is Nucleoid-associated protein IL1848, found in Idiomarina loihiensis (strain ATCC BAA-735 / DSM 15497 / L2-TR).